The chain runs to 477 residues: Ribulose bisphosphate carboxylase large chain (477 aa).

Residues 1-2 (MS) constitute a propeptide that is removed on maturation. Residue P3 is modified to N-acetylproline. N123 and T173 together coordinate substrate. K175 acts as the Proton acceptor in catalysis. Residue K177 coordinates substrate. The Mg(2+) site is built by K201, D203, and E204. Residue K201 is modified to N6-carboxylysine. Catalysis depends on H294, which acts as the Proton acceptor. Residues R295, H327, and S379 each contribute to the substrate site.

The protein belongs to the RuBisCO large chain family. Type I subfamily. As to quaternary structure, heterohexadecamer of 8 large chains and 8 small chains; disulfide-linked. The disulfide link is formed within the large subunit homodimers. It depends on Mg(2+) as a cofactor. In terms of processing, the disulfide bond which can form in the large chain dimeric partners within the hexadecamer appears to be associated with oxidative stress and protein turnover.

It localises to the plastid. The protein resides in the chloroplast. It catalyses the reaction 2 (2R)-3-phosphoglycerate + 2 H(+) = D-ribulose 1,5-bisphosphate + CO2 + H2O. It carries out the reaction D-ribulose 1,5-bisphosphate + O2 = 2-phosphoglycolate + (2R)-3-phosphoglycerate + 2 H(+). Functionally, ruBisCO catalyzes two reactions: the carboxylation of D-ribulose 1,5-bisphosphate, the primary event in carbon dioxide fixation, as well as the oxidative fragmentation of the pentose substrate in the photorespiration process. Both reactions occur simultaneously and in competition at the same active site. This is Ribulose bisphosphate carboxylase large chain from Lolium perenne (Perennial ryegrass).